The chain runs to 466 residues: Phosphomethylpyrimidine synthase (466 aa).

Substrate-binding positions include N80, M109, Y139, H175, 195–197 (SRG), 236–239 (DSLR), and E275. H279 lines the Zn(2+) pocket. Y302 contributes to the substrate binding site. A Zn(2+)-binding site is contributed by H343. [4Fe-4S] cluster-binding residues include C423, C426, and C431.

Belongs to the ThiC family. The cofactor is [4Fe-4S] cluster.

The catalysed reaction is 5-amino-1-(5-phospho-beta-D-ribosyl)imidazole + S-adenosyl-L-methionine = 4-amino-2-methyl-5-(phosphooxymethyl)pyrimidine + CO + 5'-deoxyadenosine + formate + L-methionine + 3 H(+). It participates in cofactor biosynthesis; thiamine diphosphate biosynthesis. In terms of biological role, catalyzes the synthesis of the hydroxymethylpyrimidine phosphate (HMP-P) moiety of thiamine from aminoimidazole ribotide (AIR) in a radical S-adenosyl-L-methionine (SAM)-dependent reaction. This Synechococcus sp. (strain RCC307) protein is Phosphomethylpyrimidine synthase.